Consider the following 877-residue polypeptide: Polycomb protein Scm (877 aa).

Residues 1 to 57 (MSGGRDSSTSSGSNSAAPGASTNATSSASASASSTSTSASPGSTTSPASTQRQRGRP) are disordered. Residues 7-50 (SSTSSGSNSAAPGASTNATSSASASASSTSTSASPGSTTSPAST) are compositionally biased toward low complexity. The FCS-type zinc finger occupies 54–93 (RGRPAKRATCTWCGEGKLPLQYVLPTQTGKKEFCSETCIA). C63, C66, C87, and C91 together coordinate Zn(2+). MBT repeat units follow at residues 175 to 273 (FDWD…LQPP) and 281 to 382 (SSWP…MQPP). Disordered stretches follow at residues 535-621 (NSRK…SNKV), 652-692 (TNTN…GGSA), and 713-735 (ANVK…ASLP). A Phosphothreonine modification is found at T546. A phosphoserine mark is found at S549 and S550. Residues 560 to 569 (QSNSATTSPS) are compositionally biased toward polar residues. The residue at position 585 (S585) is a Phosphoserine. A compositionally biased stretch (low complexity) spans 598 to 620 (ASQQNSNHSLNNNNNSASKSSNK). Low complexity predominate over residues 724 to 735 (SPTTLSSSASLP). Residues 806-876 (WTIEEVIQYI…KVNGRRNNLA (71 aa)) form the SAM domain.

It belongs to the SCM family. As to quaternary structure, scm associates with the PRC1 core complex containing PSC, PC, PH and Sce/RING1. Forms homotypic and heterotypic interactions. Interacts with the SAM domain of ph-p via its SAM domain in vitro. Interacts with corto in vitro.

It is found in the nucleus. In terms of biological role, polycomb group (PcG) protein. PcG proteins act by forming multiprotein complexes, which are required to maintain the transcriptionally repressive state of homeotic genes throughout development. PcG proteins are not required to initiate repression, but to maintain it during later stages of development. They probably act via the methylation of histones, rendering chromatin heritably changed in its expressibility. This Drosophila melanogaster (Fruit fly) protein is Polycomb protein Scm.